Reading from the N-terminus, the 89-residue chain is Small ribosomal subunit protein uS15 (89 aa).

This sequence belongs to the universal ribosomal protein uS15 family. Part of the 30S ribosomal subunit. Forms a bridge to the 50S subunit in the 70S ribosome, contacting the 23S rRNA.

Its function is as follows. One of the primary rRNA binding proteins, it binds directly to 16S rRNA where it helps nucleate assembly of the platform of the 30S subunit by binding and bridging several RNA helices of the 16S rRNA. In terms of biological role, forms an intersubunit bridge (bridge B4) with the 23S rRNA of the 50S subunit in the ribosome. This Escherichia coli O139:H28 (strain E24377A / ETEC) protein is Small ribosomal subunit protein uS15.